The sequence spans 194 residues: Aminodeoxychorismate/anthranilate synthase component 2 (194 aa).

In terms of domain architecture, Glutamine amidotransferase type-1 spans 1-194; that stretch reads MILMIDNYDS…IETYRKEVIA (194 aa). Residues cysteine 79, histidine 168, and glutamate 170 contribute to the active site.

As to quaternary structure, monomer. Heterodimer consisting of two non-identical subunits: a glutamine amidotransferase subunit (PabA) and a aminodeoxychorismate synthase subunit (PabB).

The enzyme catalyses chorismate + L-glutamine = anthranilate + pyruvate + L-glutamate + H(+). It carries out the reaction chorismate + L-glutamine = 4-amino-4-deoxychorismate + L-glutamate. Its pathway is amino-acid biosynthesis; L-tryptophan biosynthesis; L-tryptophan from chorismate: step 1/5. The protein operates within cofactor biosynthesis; tetrahydrofolate biosynthesis; 4-aminobenzoate from chorismate: step 1/2. Part of a heterodimeric complex that catalyzes the two-step biosynthesis of 4-amino-4-deoxychorismate (ADC), a precursor of p-aminobenzoate (PABA) and tetrahydrofolate. In the first step, a glutamine amidotransferase (PabA) generates ammonia as a substrate that, along with chorismate, is used in the second step, catalyzed by aminodeoxychorismate synthase (PabB) to produce ADC. PabA converts glutamine into glutamate only in the presence of stoichiometric amounts of PabB. Also involved in the biosynthesis of anthranilate. Complements a glutamine amidotransferase-negative mutant. In Bacillus subtilis (strain 168), this protein is Aminodeoxychorismate/anthranilate synthase component 2.